Reading from the N-terminus, the 86-residue chain is MANHKSALKRARQNEERRIRNRARKTRMKNVIRSLEEAIASNSRETALERLKMAVSVIDTTASRGVIHKNTASRKVARLSKRVNAL.

Basic residues predominate over residues 1–11; the sequence is MANHKSALKRA. The tract at residues 1-27 is disordered; the sequence is MANHKSALKRARQNEERRIRNRARKTR.

This sequence belongs to the bacterial ribosomal protein bS20 family.

Binds directly to 16S ribosomal RNA. This chain is Small ribosomal subunit protein bS20, found in Syntrophobacter fumaroxidans (strain DSM 10017 / MPOB).